Reading from the N-terminus, the 346-residue chain is Methylthioribose-1-phosphate isomerase (346 aa).

Residues 48–50, Arg91, and Gln200 contribute to the substrate site; that span reads RGA. The active-site Proton donor is the Asp241. 251–252 lines the substrate pocket; the sequence is NK.

It belongs to the eIF-2B alpha/beta/delta subunits family. MtnA subfamily.

The enzyme catalyses 5-(methylsulfanyl)-alpha-D-ribose 1-phosphate = 5-(methylsulfanyl)-D-ribulose 1-phosphate. Its pathway is amino-acid biosynthesis; L-methionine biosynthesis via salvage pathway; L-methionine from S-methyl-5-thio-alpha-D-ribose 1-phosphate: step 1/6. Catalyzes the interconversion of methylthioribose-1-phosphate (MTR-1-P) into methylthioribulose-1-phosphate (MTRu-1-P). The chain is Methylthioribose-1-phosphate isomerase from Picosynechococcus sp. (strain ATCC 27264 / PCC 7002 / PR-6) (Agmenellum quadruplicatum).